The following is a 177-amino-acid chain: MIRKGAALVGLVLMSPVIAQPVMVESGRVHLRGQLVNGGCAVATESQDLRVLMGQYRTNAFTGPGSFAPVSVPFSLRLISCSAEVWRHVGIAFAGVTPAEDPHVFLASGEGIGNAGIGLALFDDQQRQIIPNTLPLHYAPILTSEMTLHFTARYRAISENMTPGRIHSEVWFTLVYP.

An N-terminal signal peptide occupies residues Met-1–Ala-19. The cysteines at positions 40 and 81 are disulfide-linked.

This sequence belongs to the fimbrial protein family.

The protein localises to the fimbrium. This chain is Putative fimbrin-like protein FimI (fimI), found in Salmonella typhi.